Reading from the N-terminus, the 796-residue chain is RNA cytosine-C(5)-methyltransferase NSUN2 (796 aa).

The segment covering 1 to 11 (MGRRARDRRRQ) has biased composition (basic residues). A disordered region spans residues 1-36 (MGRRARDRRRQLQPQQRRERSGGGGGGGDDQAGWAG). Over residues 22–36 (GGGGGGGDDQAGWAG) the composition is skewed to gly residues. S-adenosyl-L-methionine is bound by residues 184-190 (CAAPGSK), Asp215, Asp242, and Asp268. Residue Cys321 is the Nucleophile of the active site. Disordered stretches follow at residues 435 to 501 (WNKR…CGPP) and 707 to 796 (RKEG…NVKD). Basic and acidic residues-rich tracts occupy residues 467–483 (ATEK…KKVQ), 708–721 (KEGE…EEVQ), and 733–746 (VEDK…KMEA). A compositionally biased stretch (polar residues) spans 774 to 783 (CSKNTNSHIN). Positions 784-796 (QESKDMNTNNVKD) are enriched in basic and acidic residues.

This sequence belongs to the class I-like SAM-binding methyltransferase superfamily. RsmB/NOP family. TRM4 subfamily.

The protein resides in the nucleus. It is found in the nucleolus. The protein localises to the cytoplasm. Its subcellular location is the mitochondrion. It localises to the cytoskeleton. The protein resides in the spindle. It is found in the secreted. The protein localises to the extracellular exosome. It carries out the reaction cytidine(48) in tRNA + S-adenosyl-L-methionine = 5-methylcytidine(48) in tRNA + S-adenosyl-L-homocysteine + H(+). The catalysed reaction is cytidine(49) in tRNA + S-adenosyl-L-methionine = 5-methylcytidine(49) in tRNA + S-adenosyl-L-homocysteine + H(+). The enzyme catalyses cytidine(50) in tRNA + S-adenosyl-L-methionine = 5-methylcytidine(50) in tRNA + S-adenosyl-L-homocysteine + H(+). It catalyses the reaction cytidine(34) in tRNA precursor + S-adenosyl-L-methionine = 5-methylcytidine(34) in tRNA precursor + S-adenosyl-L-homocysteine + H(+). It carries out the reaction a cytidine in mRNA + S-adenosyl-L-methionine = a 5-methylcytidine in mRNA + S-adenosyl-L-homocysteine + H(+). RNA cytosine C(5)-methyltransferase that methylates cytosine to 5-methylcytosine (m5C) in various RNAs, such as tRNAs, mRNAs and some long non-coding RNAs (lncRNAs). Involved in various processes, such as epidermal stem cell differentiation, testis differentiation and maternal to zygotic transition during early development: acts by increasing protein synthesis; cytosine C(5)-methylation promoting tRNA stability and preventing mRNA decay. Methylates cytosine to 5-methylcytosine (m5C) at positions 34 and 48 of intron-containing tRNA(Leu)(CAA) precursors, and at positions 48, 49 and 50 of tRNA(Gly)(GCC) precursors. tRNA methylation is required generation of RNA fragments derived from tRNAs (tRFs). Also mediates C(5)-methylation of mitochondrial tRNAs. Catalyzes cytosine C(5)-methylation of mRNAs, leading to stabilize them and prevent mRNA decay. Cytosine C(5)-methylation of mRNAs also regulates mRNA export. Also mediates cytosine C(5)-methylation of non-coding RNAs, such as vault RNAs (vtRNAs), promoting their processing into regulatory small RNAs. Required for proper spindle assembly and chromosome segregation, independently of its methyltransferase activity. The protein is RNA cytosine-C(5)-methyltransferase NSUN2 of Gallus gallus (Chicken).